Reading from the N-terminus, the 179-residue chain is Natural killer cells antigen CD94 (179 aa).

Residues 1 to 10 (MAVSQTTLWN) lie on the Cytoplasmic side of the membrane. Residues 11–31 (LISGILGVICLLLMTTMGILL) form a helical; Signal-anchor for type II membrane protein membrane-spanning segment. Residues 32–179 (KNLLLTESIQ…SRFICKQELM (148 aa)) lie on the Extracellular side of the membrane. Cystine bridges form between C58–C70, C61–C72, C89–C174, and C152–C166. One can recognise a C-type lectin domain in the interval 68-175 (HQCNCYLFFD…CEDKSRFICK (108 aa)). Residues N93 and N125 are each glycosylated (N-linked (GlcNAc...) asparagine).

Can form disulfide-bonded heterodimer with NKG2 family members KLRC1 and KLRC2. KLRD1-KLRC1 heterodimer interacts with peptide-bound MHC-E-B2M heterotrimeric complex. KLRD1 plays a prominent role in directly interacting with MHC-E. KLRD1-KLRC1 interacts with much higher affinity with peptide-bound MHC-E-B2M than KLRD1-KLRC2. Interacts with the adapter protein TYROBP/DAP12; this interaction is required for cell surface expression and cell activation.

It localises to the cell membrane. Its function is as follows. Immune receptor involved in self-nonself discrimination. In complex with KLRC1 or KLRC2 on cytotoxic and regulatory lymphocyte subsets, recognizes non-classical major histocompatibility (MHC) class Ib molecule MHC-E loaded with self-peptides derived from the signal sequence of classical MHC class Ia and non-classical MHC class Ib molecules. Enables cytotoxic cells to monitor the expression of MHC class I molecules in healthy cells and to tolerate self. Primarily functions as a ligand binding subunit as it lacks the capacity to signal. KLRD1-KLRC1 acts as an immune inhibitory receptor. Key inhibitory receptor on natural killer (NK) cells that regulates their activation and effector functions. Dominantly counteracts T cell receptor signaling on a subset of memory/effector CD8-positive T cells as part of an antigen-driven response to avoid autoimmunity. On intraepithelial CD8-positive gamma-delta regulatory T cells triggers TGFB1 secretion, which in turn limits the cytotoxic programming of intraepithelial CD8-positive alpha-beta T cells, distinguishing harmless from pathogenic antigens. In MHC-E-rich tumor microenvironment, acts as an immune inhibitory checkpoint and may contribute to progressive loss of effector functions of NK cells and tumor-specific T cells, a state known as cell exhaustion. Upon MHC-E-peptide binding, transmits intracellular signals through KLRC1 immunoreceptor tyrosine-based inhibition motifs (ITIMs) by recruiting INPP5D/SHIP-1 and INPPL1/SHIP-2 tyrosine phosphatases to ITIMs, and ultimately opposing signals transmitted by activating receptors through dephosphorylation of proximal signaling molecules. In terms of biological role, KLRD1-KLRC2 acts as an immune activating receptor. On cytotoxic lymphocyte subsets recognizes MHC-E loaded with signal sequence-derived peptides from non-classical MHC class Ib MHC-G molecules, likely playing a role in the generation and effector functions of adaptive NK cells and in maternal-fetal tolerance during pregnancy. Regulates the effector functions of terminally differentiated cytotoxic lymphocyte subsets, and in particular may play a role in adaptive NK cell response to viral infection. Upon MHC-E-peptide binding, transmits intracellular signals via the adapter protein TYROBP/DAP12, triggering the phosphorylation of proximal signaling molecules and cell activation. The protein is Natural killer cells antigen CD94 (KLRD1) of Canis lupus familiaris (Dog).